We begin with the raw amino-acid sequence, 316 residues long: Iron-sulfur cluster assembly SufBD family protein MJ0034 (316 aa).

The protein belongs to the iron-sulfur cluster assembly SufBD family.

The chain is Iron-sulfur cluster assembly SufBD family protein MJ0034 from Methanocaldococcus jannaschii (strain ATCC 43067 / DSM 2661 / JAL-1 / JCM 10045 / NBRC 100440) (Methanococcus jannaschii).